Reading from the N-terminus, the 514-residue chain is Cytochrome bd-II ubiquinol oxidase subunit 1 (514 aa).

Residues 1–22 (MWDVIDLSRWQFALTALYHFLF) are Cytoplasmic-facing. His-19 is a heme binding site. Residues 23-42 (VPLTLGLIFLLAIMETIYVV) form a helical membrane-spanning segment. Topologically, residues 43–94 (TGKTIYRDMTRFWGKLFGINFALGVATGLTMEFQFGTNWSFYSNYVGDIFGA) are periplasmic. Residues 95-114 (PLAMEALMAFFLESTFVGLF) form a helical membrane-spanning segment. The Cytoplasmic portion of the chain corresponds to 115–129 (FFGWQRLNKYQHLLV). Residues 130-149 (TWLVAFGSNLSALWILNANG) form a helical membrane-spanning segment. The Periplasmic segment spans residues 150–187 (WMQYPTGAHFDIDTLRMEMTSFSELVFNPVSQVKFVHT). His-186 contacts heme. Residues 188–207 (VMAGYVTGAMFIMAISAWYL) form a helical membrane-spanning segment. Topologically, residues 208 to 219 (LRGRERNVALRS) are cytoplasmic. The helical transmembrane segment at 220–239 (FAIGSVFGTLAIIGTLQLGD) threads the bilayer. The Periplasmic portion of the chain corresponds to 240-392 (SSAYEVAQVQ…VAPVFWSFRI (153 aa)). Met-393 is a heme binding site. A helical membrane pass occupies residues 393–412 (MVGCGSLLLLVMLIALVQTL). The Cytoplasmic portion of the chain corresponds to 413–470 (RGKIDQHRWVLKMALWSLPLPWIAIEAGWFMTEFGRQPWAIQDILPTYSAHSALTTGQ). Residues 471 to 490 (LAFSLIMIVGLYTLFLIAEV) form a helical membrane-spanning segment. The Periplasmic portion of the chain corresponds to 491–514 (YLMQKYARLGPSAMQSEQPTQQQG).

This sequence belongs to the cytochrome ubiquinol oxidase subunit 1 family. As to quaternary structure, heterodimer of subunits I and II. Heme is required as a cofactor. Post-translationally, the N-terminus is blocked.

The protein localises to the cell inner membrane. It carries out the reaction 2 a ubiquinol + O2 + n H(+)(in) = 2 a ubiquinone + 2 H2O + n H(+)(out). It participates in energy metabolism; oxidative phosphorylation. With respect to regulation, inhibited by cyanide; is more sensitive to cyanide than cytochrome bd-I oxidase. A terminal oxidase that catalyzes quinol-dependent, Na(+)-independent oxygen uptake. Prefers menadiol over other quinols although ubiquinol was not tested. Generates a proton motive force using protons and electrons from opposite sides of the membrane to generate H(2)O, transferring 1 proton/electron. This Escherichia coli (strain K12) protein is Cytochrome bd-II ubiquinol oxidase subunit 1 (appC).